The sequence spans 689 residues: Protein SDA1 homolog (689 aa).

Positions 254–319 (KKNTKNKKKL…RFEVKLMHMD (66 aa)) form a coiled coil. 2 disordered regions span residues 485-512 (EQEKTEEPEEDDGWESASLSDDDEDGEW) and 606-689 (KPKS…RLMK). A compositionally biased stretch (basic and acidic residues) spans 668-681 (SFRDKQIALRDSLL).

The protein belongs to the SDA1 family.

The protein localises to the nucleus. It localises to the nucleolus. In terms of biological role, required for 60S pre-ribosomal subunits export to the cytoplasm. This Xenopus tropicalis (Western clawed frog) protein is Protein SDA1 homolog (sdad1).